The primary structure comprises 420 residues: Glucose-1-phosphate adenylyltransferase (420 aa).

Alpha-D-glucose 1-phosphate is bound by residues Tyr-107, Gly-173, 188-189 (EK), and Ser-206.

This sequence belongs to the bacterial/plant glucose-1-phosphate adenylyltransferase family. Homotetramer.

The enzyme catalyses alpha-D-glucose 1-phosphate + ATP + H(+) = ADP-alpha-D-glucose + diphosphate. Its pathway is glycan biosynthesis; glycogen biosynthesis. Functionally, involved in the biosynthesis of ADP-glucose, a building block required for the elongation reactions to produce glycogen. Catalyzes the reaction between ATP and alpha-D-glucose 1-phosphate (G1P) to produce pyrophosphate and ADP-Glc. The protein is Glucose-1-phosphate adenylyltransferase of Shewanella baltica (strain OS155 / ATCC BAA-1091).